A 192-amino-acid polypeptide reads, in one-letter code: 3-hydroxyanthranilate 3,4-dioxygenase (192 aa).

Residue arginine 50 coordinates O2. 3 residues coordinate Fe cation: histidine 54, glutamate 60, and histidine 102. Residue glutamate 60 participates in substrate binding. Arginine 106 and glutamate 116 together coordinate substrate. A divalent metal cation contacts are provided by cysteine 131, cysteine 134, cysteine 168, and cysteine 171.

Belongs to the 3-HAO family. The cofactor is Fe(2+).

It is found in the cytoplasm. It catalyses the reaction 3-hydroxyanthranilate + O2 = (2Z,4Z)-2-amino-3-carboxymuconate 6-semialdehyde. Its pathway is cofactor biosynthesis; NAD(+) biosynthesis; quinolinate from L-kynurenine: step 3/3. Its function is as follows. Catalyzes the oxidative ring opening of 3-hydroxyanthranilate to 2-amino-3-carboxymuconate semialdehyde, which spontaneously cyclizes to quinolinate. The sequence is that of 3-hydroxyanthranilate 3,4-dioxygenase from Coccidioides immitis (strain RS) (Valley fever fungus).